The chain runs to 218 residues: Thiopurine S-methyltransferase (218 aa).

S-adenosyl-L-methionine-binding residues include Trp-10, Leu-45, Glu-66, and Arg-123.

It belongs to the class I-like SAM-binding methyltransferase superfamily. TPMT family.

The protein localises to the cytoplasm. The catalysed reaction is S-adenosyl-L-methionine + a thiopurine = S-adenosyl-L-homocysteine + a thiopurine S-methylether.. The protein is Thiopurine S-methyltransferase of Pseudomonas aeruginosa (strain UCBPP-PA14).